Reading from the N-terminus, the 299-residue chain is Epimerase family protein SH2119 (299 aa).

Belongs to the NAD(P)-dependent epimerase/dehydratase family. SDR39U1 subfamily.

The polypeptide is Epimerase family protein SH2119 (Staphylococcus haemolyticus (strain JCSC1435)).